The primary structure comprises 116 residues: MNVIDQLEREQMRMDIPAFRPGDTIKVHLRIIEGEKERIQVFQGAVLRLRKGGVDSTFTVRKVSDGVGVERVFPMHSPFIERIEVVAQGKVRRSRLYYLRALRGKAARIKTRTAWD.

It belongs to the bacterial ribosomal protein bL19 family.

Its function is as follows. This protein is located at the 30S-50S ribosomal subunit interface and may play a role in the structure and function of the aminoacyl-tRNA binding site. This chain is Large ribosomal subunit protein bL19, found in Solidesulfovibrio magneticus (strain ATCC 700980 / DSM 13731 / RS-1) (Desulfovibrio magneticus).